The primary structure comprises 932 residues: Protocadherin gamma-A12 (932 aa).

An N-terminal signal peptide occupies residues 1–29; that stretch reads MIPARLHRDYKGLVLLGILLGTLWETGCT. 6 consecutive Cadherin domains span residues 30 to 133, 134 to 242, 243 to 347, 348 to 452, 453 to 562, and 570 to 683; these read QIRY…APYF, RESE…APAF, AQPE…APEV, VLTS…PPVF, PQAS…APEI, and DGST…SPAN. At 30–692 the chain is on the extracellular side; it reads QIRYSVPEEL…NSETSDLTLY (663 aa). Residues Asn265, Asn419, and Asn545 are each glycosylated (N-linked (GlcNAc...) asparagine). The helical transmembrane segment at 693–713 threads the bilayer; that stretch reads LVVAVAAVSCVFLAFVILLLA. Residues 714–932 lie on the Cytoplasmic side of the membrane; that stretch reads LRLRRWHKSR…KKKSGKKEKK (219 aa). 2 disordered regions span residues 803 to 841 and 902 to 932; these read GHGLIEQAPPNTDWRFSQAQRPGTSGSQNGDDTGTWPNN and ATLTNAAGKRDGKAPAGGNGNKKKSGKKEKK. Polar residues predominate over residues 816–841; the sequence is WRFSQAQRPGTSGSQNGDDTGTWPNN. The segment covering 922 to 932 has biased composition (basic residues); that stretch reads NKKKSGKKEKK.

The protein resides in the cell membrane. Its function is as follows. Potential calcium-dependent cell-adhesion protein. May be involved in the establishment and maintenance of specific neuronal connections in the brain. This chain is Protocadherin gamma-A12 (PCDHGA12), found in Pan troglodytes (Chimpanzee).